Consider the following 178-residue polypeptide: Large ribosomal subunit protein uL16 (178 aa).

The protein belongs to the universal ribosomal protein uL16 family.

The chain is Large ribosomal subunit protein uL16 from Saccharolobus solfataricus (strain ATCC 35092 / DSM 1617 / JCM 11322 / P2) (Sulfolobus solfataricus).